The primary structure comprises 184 residues: Type-1 fimbrial protein, A chain (184 aa).

The first 22 residues, 1 to 22, serve as a signal peptide directing secretion; it reads MKHKLMTSTIASLMFVAGAAVA. Cysteine 46 and cysteine 86 are disulfide-bonded.

This sequence belongs to the fimbrial protein family.

Its subcellular location is the fimbrium. Functionally, fimbriae (also called pili), polar filaments radiating from the surface of the bacterium to a length of 0.5-1.5 micrometers and numbering 100-300 per cell, enable bacteria to colonize the epithelium of specific host organs. The protein is Type-1 fimbrial protein, A chain (fimA) of Salmonella typhi.